Here is a 589-residue protein sequence, read N- to C-terminus: Aspartate--tRNA(Asp/Asn) ligase (589 aa).

Position 176 (glutamate 176) interacts with L-aspartate. The tract at residues 200–203 (QLFK) is aspartate. Residue arginine 222 participates in L-aspartate binding. Residues 222 to 224 (RDE) and glutamine 231 contribute to the ATP site. Histidine 450 contacts L-aspartate. Residue glutamate 484 coordinates ATP. Residue arginine 491 coordinates L-aspartate. 536-539 (GLDR) contacts ATP.

Belongs to the class-II aminoacyl-tRNA synthetase family. Type 1 subfamily. In terms of assembly, homodimer.

It localises to the cytoplasm. The enzyme catalyses tRNA(Asx) + L-aspartate + ATP = L-aspartyl-tRNA(Asx) + AMP + diphosphate. Its function is as follows. Aspartyl-tRNA synthetase with relaxed tRNA specificity since it is able to aspartylate not only its cognate tRNA(Asp) but also tRNA(Asn). Reaction proceeds in two steps: L-aspartate is first activated by ATP to form Asp-AMP and then transferred to the acceptor end of tRNA(Asp/Asn). The polypeptide is Aspartate--tRNA(Asp/Asn) ligase (Bacillus cytotoxicus (strain DSM 22905 / CIP 110041 / 391-98 / NVH 391-98)).